Here is a 445-residue protein sequence, read N- to C-terminus: E3 ubiquitin-protein ligase MYLIP (445 aa).

The region spanning 1 to 279 is the FERM domain; it reads MLCYVTRPDA…ETHAFYRCDT (279 aa). A disordered region spans residues 341-363; the sequence is RNDQSPPSSPLKSSDSSMSCSSC. Low complexity predominate over residues 350–363; sequence PLKSSDSSMSCSSC. Fe cation is bound by residues Cys-360, Cys-363, and Cys-368. The RING-type zinc-finger motif lies at 387–422; the sequence is CMVCCEEEINSTFCPCGHTVCCESCAAQLQSCPVCR. Positions 431 to 433 are critical for homodimerization; sequence VYL.

As to quaternary structure, homodimer. Interacts with the E2 ubiquitin-conjugating enzyme, UBE2D1 (via RING-type zinc finger). Interacts with myosin regulatory light chain (MRLC) and TMEM4. In terms of processing, autoubiquitinated. Expressed in developing and adult brain, hippocampus, cerebellum, cerebral cortex, thalamus and substantia nigra. Predominantly found in neurons.

It is found in the cytoplasm. It localises to the cell membrane. The catalysed reaction is S-ubiquitinyl-[E2 ubiquitin-conjugating enzyme]-L-cysteine + [acceptor protein]-L-lysine = [E2 ubiquitin-conjugating enzyme]-L-cysteine + N(6)-ubiquitinyl-[acceptor protein]-L-lysine.. It functions in the pathway protein modification; protein ubiquitination. Its activity is regulated as follows. Can bind 1 iron ion per dimer. Iron binding seems to decrease LDLR degradation activity. Its function is as follows. E3 ubiquitin-protein ligase that mediates ubiquitination and subsequent proteasomal degradation of myosin regulatory light chain (MRLC), LDLR, VLDLR and LRP8. Activity depends on E2 enzymes of the UBE2D family. Proteasomal degradation of MRLC leads to inhibit neurite outgrowth in presence of NGF by counteracting the stabilization of MRLC by saposin-like protein (CNPY2/MSAP) and reducing CNPY2-stimulated neurite outgrowth. Acts as a sterol-dependent inhibitor of cellular cholesterol uptake by mediating ubiquitination and subsequent degradation of LDLR. This chain is E3 ubiquitin-protein ligase MYLIP (Mylip), found in Rattus norvegicus (Rat).